Consider the following 892-residue polypeptide: DNA replication licensing factor mcm6 (892 aa).

Phosphoserine is present on residues S96 and S98. Residues 426–633 enclose the MCM domain; that stretch reads IYSRLTNSLA…VDRHLAKHIV (208 aa). 476 to 483 lines the ATP pocket; the sequence is GDPSTSKS. The Arginine finger signature appears at 608 to 611; it reads SRFD. Residues 748–758 are compositionally biased toward acidic residues; that stretch reads EDDAEAQELEN. The interval 748–774 is disordered; sequence EDDAEAQELENDNTNTTNGNDNVSSEE. The span at 759-769 shows a compositional bias: low complexity; it reads DNTNTTNGNDN.

This sequence belongs to the MCM family. In terms of assembly, component of the mcm2-7 complex. The complex forms a toroidal hexameric ring with the proposed subunit order mcm2-mcm6-mcm4-mcm7-mcm3-mcm5. The heterodimers of mcm4/mcm6 and mcm3/mcm5 interact with mcm2 and mcm7. Interacts with sld3.

Its subcellular location is the nucleus. The enzyme catalyses ATP + H2O = ADP + phosphate + H(+). In terms of biological role, acts as a component of the mcm2-7 complex (mcm complex) which is the putative replicative helicase essential for 'once per cell cycle' DNA replication initiation and elongation in eukaryotic cells. The active ATPase sites in the mcm2-7 ring are formed through the interaction surfaces of two neighboring subunits such that a critical structure of a conserved arginine finger motif is provided in trans relative to the ATP-binding site of the Walker A box of the adjacent subunit. The six ATPase active sites, however, are likely to contribute differentially to the complex helicase activity. This is DNA replication licensing factor mcm6 (mcm6) from Schizosaccharomyces pombe (strain 972 / ATCC 24843) (Fission yeast).